The chain runs to 445 residues: Argininosuccinate synthase (445 aa).

Residues 17-25 (AFSGGLDTS) and alanine 43 contribute to the ATP site. Tyrosine 99 contacts L-citrulline. ATP contacts are provided by glycine 129 and threonine 131. Positions 131, 135, and 136 each coordinate L-aspartate. Asparagine 135 serves as a coordination point for L-citrulline. Position 136 (aspartate 136) interacts with ATP. L-citrulline is bound by residues arginine 139 and serine 192. Position 194 (aspartate 194) interacts with ATP. L-citrulline is bound by residues threonine 201, glutamate 203, and glutamate 280.

It belongs to the argininosuccinate synthase family. Type 2 subfamily. Homotetramer.

The protein resides in the cytoplasm. The enzyme catalyses L-citrulline + L-aspartate + ATP = 2-(N(omega)-L-arginino)succinate + AMP + diphosphate + H(+). It participates in amino-acid biosynthesis; L-arginine biosynthesis; L-arginine from L-ornithine and carbamoyl phosphate: step 2/3. This is Argininosuccinate synthase from Burkholderia ambifaria (strain ATCC BAA-244 / DSM 16087 / CCUG 44356 / LMG 19182 / AMMD) (Burkholderia cepacia (strain AMMD)).